The primary structure comprises 262 residues: Phosphate import ATP-binding protein PstB (262 aa).

The 242-residue stretch at 16–257 (IDVRNLNFYY…PHRKETEDYI (242 aa)) folds into the ABC transporter domain. Position 48–55 (48–55 (GPSGCGKS)) interacts with ATP.

Belongs to the ABC transporter superfamily. Phosphate importer (TC 3.A.1.7) family. In terms of assembly, the complex is composed of two ATP-binding proteins (PstB), two transmembrane proteins (PstC and PstA) and a solute-binding protein (PstS).

It is found in the cell inner membrane. The enzyme catalyses phosphate(out) + ATP + H2O = ADP + 2 phosphate(in) + H(+). Its function is as follows. Part of the ABC transporter complex PstSACB involved in phosphate import. Responsible for energy coupling to the transport system. In Cupriavidus pinatubonensis (strain JMP 134 / LMG 1197) (Cupriavidus necator (strain JMP 134)), this protein is Phosphate import ATP-binding protein PstB.